Reading from the N-terminus, the 139-residue chain is Transcription antitermination protein NusB (139 aa).

Belongs to the NusB family.

Functionally, involved in transcription antitermination. Required for transcription of ribosomal RNA (rRNA) genes. Binds specifically to the boxA antiterminator sequence of the ribosomal RNA (rrn) operons. The chain is Transcription antitermination protein NusB from Cronobacter sakazakii (strain ATCC BAA-894) (Enterobacter sakazakii).